We begin with the raw amino-acid sequence, 309 residues long: Dehydrogenase/reductase SDR family member 7B (309 aa).

Residues 1 to 4 (MDLT) lie on the Cytoplasmic side of the membrane. The helical; Signal-anchor for type II membrane protein transmembrane segment at 5-25 (TWAIFPLLLGSIGVYSLYKLL) threads the bilayer. The Lumenal segment spans residues 26 to 272 (QRLRSGAYLQ…AVGERRKELL (247 aa)). NAD(+) contacts are provided by Ser46 and Leu48. Position 178 (Ser178) interacts with substrate. NAD(+)-binding residues include Tyr191, Lys195, and Thr226. The active-site Proton acceptor is the Tyr191.

It belongs to the short-chain dehydrogenases/reductases (SDR) family.

The protein localises to the endoplasmic reticulum membrane. Putative oxidoreductase. This chain is Dehydrogenase/reductase SDR family member 7B (dhrs7b), found in Xenopus tropicalis (Western clawed frog).